We begin with the raw amino-acid sequence, 866 residues long: Protein SEY1 (866 aa).

At 1-746 the chain is on the cytoplasmic side; that stretch reads MVSNGHFAYA…KRSAIGGMTQ (746 aa). One can recognise a GB1/RHD3-type G domain in the interval 48–305; sequence GFNYHLISVF…IPADGFAVYA (258 aa). 58–65 lines the GTP pocket; it reads GSQSTGKS. Positions 480 to 506 form a coiled coil; that stretch reads SNYTQELALYQKDLEKISAQLRKDEMR. Residues 747-767 form a helical membrane-spanning segment; that stretch reads IPVYFYILLLALGWNEIIAVL. The Lumenal portion of the chain corresponds to 768 to 770; sequence RNP. The chain crosses the membrane as a helical span at residues 771–791; that stretch reads VYFFMLFLCSVAAYIIYQLNL. Residues 792 to 866 are Cytoplasmic-facing; it reads WGPMVKMAEA…DDEVEGEETW (75 aa). A disordered region spans residues 840-866; the sequence is SHVRSGRNATKINERDDDDEVEGEETW. Acidic residues predominate over residues 854-866; the sequence is RDDDDEVEGEETW.

This sequence belongs to the TRAFAC class dynamin-like GTPase superfamily. GB1/RHD3 GTPase family. RHD3 subfamily.

It localises to the endoplasmic reticulum membrane. Functionally, cooperates with the reticulon proteins and tubule-shaping DP1 family proteins to generate and maintain the structure of the tubular endoplasmic reticulum network. Has GTPase activity, which is required for its function in ER organization. In Coccidioides immitis (strain RS) (Valley fever fungus), this protein is Protein SEY1.